Reading from the N-terminus, the 120-residue chain is Large ribosomal subunit protein eL18 (120 aa).

It belongs to the eukaryotic ribosomal protein eL18 family.

This Methanococcus maripaludis (strain DSM 14266 / JCM 13030 / NBRC 101832 / S2 / LL) protein is Large ribosomal subunit protein eL18.